A 187-amino-acid polypeptide reads, in one-letter code: Threonylcarbamoyl-AMP synthase (187 aa).

The 184-residue stretch at 4 to 187 (TLTLSEAVTA…DARSGHILRL (184 aa)) folds into the YrdC-like domain.

It belongs to the SUA5 family. TsaC subfamily.

It localises to the cytoplasm. The enzyme catalyses L-threonine + hydrogencarbonate + ATP = L-threonylcarbamoyladenylate + diphosphate + H2O. In terms of biological role, required for the formation of a threonylcarbamoyl group on adenosine at position 37 (t(6)A37) in tRNAs that read codons beginning with adenine. Catalyzes the conversion of L-threonine, HCO(3)(-)/CO(2) and ATP to give threonylcarbamoyl-AMP (TC-AMP) as the acyladenylate intermediate, with the release of diphosphate. This is Threonylcarbamoyl-AMP synthase from Xylella fastidiosa (strain M12).